Here is a 258-residue protein sequence, read N- to C-terminus: 5'-nucleotidase SurE (258 aa).

Residues D10, D11, S41, and N96 each contribute to the a divalent metal cation site.

This sequence belongs to the SurE nucleotidase family. The cofactor is a divalent metal cation.

It localises to the cytoplasm. It carries out the reaction a ribonucleoside 5'-phosphate + H2O = a ribonucleoside + phosphate. In terms of biological role, nucleotidase that shows phosphatase activity on nucleoside 5'-monophosphates. The sequence is that of 5'-nucleotidase SurE from Sorangium cellulosum (strain So ce56) (Polyangium cellulosum (strain So ce56)).